Here is a 58-residue protein sequence, read N- to C-terminus: Small ribosomal subunit protein bS21 (58 aa).

Residues 36-58 (RHHETPVEKYKRKLQQRRRSRRR) form a disordered region. Over residues 45–58 (YKRKLQQRRRSRRR) the composition is skewed to basic residues.

Belongs to the bacterial ribosomal protein bS21 family.

The polypeptide is Small ribosomal subunit protein bS21 (Prochlorococcus marinus (strain NATL1A)).